Here is a 269-residue protein sequence, read N- to C-terminus: Small ribosomal subunit protein uS2 (269 aa).

The tract at residues 235-269 is disordered; sequence FDAKNPLKPQNYNTLNKRPYQDSPRKPSYQNQNQR.

Belongs to the universal ribosomal protein uS2 family.

The protein is Small ribosomal subunit protein uS2 of Aster yellows witches'-broom phytoplasma (strain AYWB).